A 400-amino-acid chain; its full sequence is Gap junction alpha-8 protein (400 aa).

An intramembrane segment occupies 2–12 (GDWSFLGNILE). Residues 13-21 (QVNEQSTVI) are Cytoplasmic-facing. A helical transmembrane segment spans residues 22–42 (GRVWLTVLFIFRILILGTAAE). Over 43–71 (LVWGDEQSDFVCNTQQPGCENVCYDEAFP) the chain is Extracellular. Disulfide bonds link cysteine 54–cysteine 196, cysteine 61–cysteine 190, and cysteine 65–cysteine 185. A helical transmembrane segment spans residues 72–92 (ISHIRLWVLQIIFVSTPSLVY). Residues 93 to 156 (FGHAVHHVRM…GTLLRTYILH (64 aa)) lie on the Cytoplasmic side of the membrane. A compositionally biased stretch (basic and acidic residues) spans 104-118 (EKRKEREEAERRQQA). The disordered stretch occupies residues 104–139 (EKRKEREEAERRQQAEVDEEKLPLAPNQNKGNNPDG). The segment covering 129–138 (PNQNKGNNPD) has biased composition (polar residues). Residues 157 to 177 (IIFKTLFEVGFIVGQYFLYGF) form a helical membrane-spanning segment. Residues 178 to 205 (RILPLYRCGRWPCPNLVDCFVSRPTEKT) lie on the Extracellular side of the membrane. Residues 206-226 (IFIMFMLVVAAVSLFLNLVEI) traverse the membrane as a helical segment. Residues 227-400 (SHLILKRIRR…SRARSDDLTV (174 aa)) lie on the Cytoplasmic side of the membrane. A disordered region spans residues 323–400 (YAQAKEPEEE…SRARSDDLTV (78 aa)). Residues 327–336 (KEPEEEKVKA) are compositionally biased toward basic and acidic residues. Acidic residues predominate over residues 337–346 (EEEEEQEEEQ). Serine 364 is subject to Phosphoserine; by CK2. The segment covering 381-392 (RSLSRLSKASSR) has biased composition (low complexity).

Belongs to the connexin family. Alpha-type (group II) subfamily. In terms of assembly, a hemichannel or connexon is composed of a hexamer of connexins. A functional gap junction is formed by the apposition of two hemichannels. Forms heteromeric channels with GJA3. During early stages of lens development, interacts with the C-terminus of MIP. In terms of processing, proteolytically cleaved by caspase-3 during lens development. Post-translationally, phosphorylated on Ser-364; which inhibits cleavage by caspase-3.

It localises to the cell membrane. The protein resides in the cell junction. The protein localises to the gap junction. In terms of biological role, structural component of eye lens gap junctions. Gap junctions are dodecameric channels that connect the cytoplasm of adjoining cells. They are formed by the docking of two hexameric hemichannels, one from each cell membrane. Small molecules and ions diffuse from one cell to a neighboring cell via the central pore. The polypeptide is Gap junction alpha-8 protein (GJA8) (Gallus gallus (Chicken)).